We begin with the raw amino-acid sequence, 352 residues long: Ion-translocating oxidoreductase complex subunit D (352 aa).

Helical transmembrane passes span 20–40 (IMLLVLLAAVPGIAAQLWFFG), 42–62 (GTLVQILLASVSALLAEALVL), 89–109 (IPPLAPWWMVVLGTVFAAIIA), and 123–143 (PAMIGYVVLLISFPVQMTSWL). Position 187 is an FMN phosphoryl threonine (Thr-187). Transmembrane regions (helical) follow at residues 214-234 (ILAGAGWQWVNLAWLAGGLWL), 242-262 (WHIPLSFLVTLALCATLGWLF), 267-287 (LAAPQIHLLSGATMLGAFFIL), 301-321 (LIFGALAGLLVWLIRSFGGYP), and 322-342 (DGVAFAVLLANITVPLIDYYT).

The protein belongs to the NqrB/RnfD family. The complex is composed of six subunits: RsxA, RsxB, RsxC, RsxD, RsxE and RsxG. FMN serves as cofactor.

It localises to the cell inner membrane. Functionally, part of a membrane-bound complex that couples electron transfer with translocation of ions across the membrane. Required to maintain the reduced state of SoxR. In Escherichia coli (strain ATCC 8739 / DSM 1576 / NBRC 3972 / NCIMB 8545 / WDCM 00012 / Crooks), this protein is Ion-translocating oxidoreductase complex subunit D.